Consider the following 307-residue polypeptide: Metapyrocatechase (307 aa).

VOC domains are found at residues 7 to 122 (RPGH…LYAD) and 150 to 269 (RFDH…VFCG). Histidine 153, histidine 214, and glutamate 265 together coordinate Fe cation.

This sequence belongs to the extradiol ring-cleavage dioxygenase family. Homotetramer. The cofactor is Fe(2+).

The enzyme catalyses catechol + O2 = (2Z,4E)-2-hydroxy-6-oxohexa-2,4-dienoate + H(+). It functions in the pathway xenobiotic degradation; toluene degradation. The chain is Metapyrocatechase (bztE) from Pseudomonas aeruginosa.